The primary structure comprises 274 residues: Thymidylate synthase (274 aa).

Arginine 21 contributes to the dUMP binding site. Histidine 51 is a (6R)-5,10-methylene-5,6,7,8-tetrahydrofolate binding site. Residue 123-124 (RR) coordinates dUMP. The Nucleophile role is filled by cysteine 156. DUMP contacts are provided by residues 176–179 (RSAD), asparagine 187, and 217–219 (HIY). Aspartate 179 lines the (6R)-5,10-methylene-5,6,7,8-tetrahydrofolate pocket. A (6R)-5,10-methylene-5,6,7,8-tetrahydrofolate-binding site is contributed by alanine 273.

This sequence belongs to the thymidylate synthase family. Bacterial-type ThyA subfamily. Homodimer.

It is found in the cytoplasm. It catalyses the reaction dUMP + (6R)-5,10-methylene-5,6,7,8-tetrahydrofolate = 7,8-dihydrofolate + dTMP. It participates in pyrimidine metabolism; dTTP biosynthesis. Its function is as follows. Catalyzes the reductive methylation of 2'-deoxyuridine-5'-monophosphate (dUMP) to 2'-deoxythymidine-5'-monophosphate (dTMP) while utilizing 5,10-methylenetetrahydrofolate (mTHF) as the methyl donor and reductant in the reaction, yielding dihydrofolate (DHF) as a by-product. This enzymatic reaction provides an intracellular de novo source of dTMP, an essential precursor for DNA biosynthesis. The polypeptide is Thymidylate synthase (Christiangramia forsetii (strain DSM 17595 / CGMCC 1.15422 / KT0803) (Gramella forsetii)).